Here is a 362-residue protein sequence, read N- to C-terminus: Peptide chain release factor 1 (362 aa).

Residue Q235 is modified to N5-methylglutamine.

The protein belongs to the prokaryotic/mitochondrial release factor family. In terms of processing, methylated by PrmC. Methylation increases the termination efficiency of RF1.

Its subcellular location is the cytoplasm. In terms of biological role, peptide chain release factor 1 directs the termination of translation in response to the peptide chain termination codons UAG and UAA. This is Peptide chain release factor 1 from Buchnera aphidicola subsp. Baizongia pistaciae (strain Bp).